Here is a 2417-residue protein sequence, read N- to C-terminus: Protein pad-1 (2417 aa).

Disordered stretches follow at residues 409–437 (SSNS…DREG), 449–475 (SNKD…PDEE), 994–1029 (TSTG…DDDT), and 1957–2032 (SMSN…RRDP). 2 stretches are compositionally biased toward low complexity: residues 456-468 (TSVT…NASS) and 1002-1024 (DPSA…VVPA). Polar residues predominate over residues 1969 to 1982 (DNPSGSTRNSTLSL). A compositionally biased stretch (basic and acidic residues) spans 2003 to 2014 (SKSENMKIEKKS). Polar residues predominate over residues 2015–2025 (SSNLRASIKDT).

It belongs to the DOP1 family.

Functionally, may be involved in protein traffic between late Golgi and early endosomes. Essential for cell patterning during gastrulation. This Caenorhabditis elegans protein is Protein pad-1 (pad-1).